We begin with the raw amino-acid sequence, 427 residues long: Glucose-6-phosphate isomerase (427 aa).

The Proton donor role is filled by Glu281. Residues His302 and Lys417 contribute to the active site.

It belongs to the GPI family.

It localises to the cytoplasm. The enzyme catalyses alpha-D-glucose 6-phosphate = beta-D-fructose 6-phosphate. It participates in carbohydrate biosynthesis; gluconeogenesis. Its pathway is carbohydrate degradation; glycolysis; D-glyceraldehyde 3-phosphate and glycerone phosphate from D-glucose: step 2/4. Functionally, catalyzes the reversible isomerization of glucose-6-phosphate to fructose-6-phosphate. This Mycoplasmopsis pulmonis (strain UAB CTIP) (Mycoplasma pulmonis) protein is Glucose-6-phosphate isomerase.